Consider the following 324-residue polypeptide: Tumor necrosis factor receptor superfamily member 6 (324 aa).

Residues 1-21 (MLWIMAVLPLVLAGPELNVRM) form the signal peptide. Residues 22 to 171 (QGTDSIFEGL…CKKQSSNYKL (150 aa)) are Extracellular-facing. Residue asparagine 43 is glycosylated (N-linked (GlcNAc...) asparagine). TNFR-Cys repeat units follow at residues 43–79 (NCSEGLYQVGPFCCQPCQPGERKVKDCTTSGGAPTCH), 80–123 (PCTE…NTKC), and 124–163 (RCKENFYCNASLCDHCYHCTSCGLEDILEPCTRTSNTKCK). Intrachain disulfides connect cysteine 44–cysteine 55, cysteine 56–cysteine 69, cysteine 59–cysteine 78, cysteine 81–cysteine 97, cysteine 100–cysteine 115, cysteine 103–cysteine 123, cysteine 125–cysteine 139, cysteine 142–cysteine 154, and cysteine 145–cysteine 162. Residues asparagine 114 and asparagine 132 are each glycosylated (N-linked (GlcNAc...) asparagine). The chain crosses the membrane as a helical span at residues 172-188 (LWLLILPGLAILFVFIY). Over 189–324 (KRYRKRQPGD…RNENEGQSLE (136 aa)) the chain is Cytoplasmic. Positions 201–306 (SGIPSPESVP…EEIQAMVWED (106 aa)) are interaction with HIPK3. Serine 214 bears the Phosphoserine mark. Residues 219-243 (NKYIWRTAEKMKICDAKKFARQHKI) are interaction with CALM. The Death domain maps to 219–303 (NKYIWRTAEK…DIAEEIQAMV (85 aa)).

In terms of assembly, component of the death-induced signaling complex (DISC) composed of cell surface receptor FAS/CD95, adapter protein FADD and the CASP8 protease; recruitment of CASP8 to the complex is required for processing of CASP8 into the p18 and p10 subunits. Interacts directly (via DED domain) with NOL3 (via CARD domain); inhibits death-inducing signaling complex (DISC) assembly by inhibiting the increase in FAS-FADD binding induced by FAS activation. Binds DAXX. Interacts with HIPK3. Part of a complex containing HIPK3 and FADD. Binds RIPK1 and FAIM2. Interacts with BABAM2 and FEM1B. Interacts with CALM. In the absence of stimulation, interacts with BIRC2, DDX3X and GSK3B. The interaction with BIRC2 and DDX3X is further enhanced upon receptor stimulation and accompanied by DDX3X and BIRC2 cleavage. Palmitoylated. Palmitoylation by ZDHHC7 prevents the lysosomal degradation of FAS regulating its expression at the plasma membrane.

The protein localises to the cell membrane. Its subcellular location is the membrane raft. Functionally, receptor for TNFSF6/FASLG. The adapter molecule FADD recruits caspase CASP8 to the activated receptor. The resulting death-inducing signaling complex (DISC) performs CASP8 proteolytic activation which initiates the subsequent cascade of caspases (aspartate-specific cysteine proteases) mediating apoptosis. FAS-mediated apoptosis may have a role in the induction of peripheral tolerance, in the antigen-stimulated suicide of mature T-cells, or both. This chain is Tumor necrosis factor receptor superfamily member 6 (Fas), found in Rattus norvegicus (Rat).